The chain runs to 439 residues: L-tryptophan decarboxylase (439 aa).

Belongs to the phosphatidylserine decarboxylase family.

It catalyses the reaction L-tryptophan + H(+) = tryptamine + CO2. It functions in the pathway secondary metabolite biosynthesis. Functionally, L-tryptophan decarboxylase; part of the gene cluster that mediates the biosynthesis of psilocybin, a psychotropic tryptamine-derived natural product. The first step in the pathway is the decarboxylation of L-tryptophan to tryptamine by the decarboxylase psiD. 4-hydroxy-L-tryptophan is accepted as substrate by psiD as well. The cytochrome P450 monooxygenase psiH then converts tryptamine to 4-hydroxytryptamine. The kinase psiK catalyzes the 4-O-phosphorylation step by converting 4-hydroxytryptamine into norbaeocystin. The methyltransferase psiM then catalyzes iterative methyl transfer to the amino group of norbaeocystin to yield psilocybin via a monomethylated intermediate, baeocystin. 4-hydroxy-6-methyl-l-tryptophancan also be converted the decarboxylase PsiD, kinase PsiK, and methyltransferase PsiM into respectively 6-methyl-norbaeocystin, 6-methylbaeocystin, and 6-methylpsilocybin. The sequence is that of L-tryptophan decarboxylase from Psilocybe cubensis (Psychedelic mushroom).